Reading from the N-terminus, the 411-residue chain is Aspartokinase (411 aa).

7-10 contacts ATP; the sequence is KFGG. 25-30 contributes to the substrate binding site; it reads RVIEEK. Residue serine 41 participates in ATP binding. Substrate-binding positions include 47–49, glutamate 74, 125–126, 150–153, and serine 153; these read TDE, LN, and RGGS. ATP-binding positions include 173-174 and 179-184; these read TD and FTTDPR. ACT domains lie at 264 to 338 and 344 to 411; these read VTVF…SETG and IVGS…KSER. Substrate-binding positions include 289-291, glutamine 295, 355-356, 369-370, and 376-377; these read NVD, VA, QV, and SE.

Belongs to the aspartokinase family. In terms of assembly, tetramer consisting of 2 isoforms Alpha (catalytic and regulation) and of a homodimer of 2 isoforms Beta (regulation).

It catalyses the reaction L-aspartate + ATP = 4-phospho-L-aspartate + ADP. It participates in amino-acid biosynthesis; L-lysine biosynthesis via DAP pathway; (S)-tetrahydrodipicolinate from L-aspartate: step 1/4. It functions in the pathway amino-acid biosynthesis; L-methionine biosynthesis via de novo pathway; L-homoserine from L-aspartate: step 1/3. Its pathway is amino-acid biosynthesis; L-threonine biosynthesis; L-threonine from L-aspartate: step 1/5. With respect to regulation, lysine-sensitive. Catalyzes the phosphorylation of the beta-carboxyl group of aspartic acid with ATP to yield 4-phospho-L-aspartate, which is involved in the branched biosynthetic pathway leading to the biosynthesis of amino acids threonine, isoleucine and methionine. The polypeptide is Aspartokinase (lysC) (Bacillus sp. (strain MGA3)).